The sequence spans 105 residues: MVNVPKTRRTFCDGKCRRHTMHKVTQYKKGKESRLAQGRRRYDSKQKGFGGQTKPIFRKKAKTTKKIVLRMECTECKHRKQLPIKRCKHFELGGQKKTRGQVIQF.

Positions 23–52 are disordered; sequence KVTQYKKGKESRLAQGRRRYDSKQKGFGGQ. A compositionally biased stretch (basic and acidic residues) spans 29 to 46; that stretch reads KGKESRLAQGRRRYDSKQ.

The protein belongs to the eukaryotic ribosomal protein eL42 family.

This is Large ribosomal subunit protein eL42 (rpl-44) from Brugia malayi (Filarial nematode worm).